Consider the following 380-residue polypeptide: Cytochrome b (380 aa).

Helical transmembrane passes span 34 to 54, 78 to 99, 114 to 134, and 179 to 199; these read FGSL…LLAM, WLIR…YLHI, WNVG…GYVL, and FFAL…VHLT. Heme b-binding residues include His-84 and His-98. Residues His-183 and His-197 each coordinate heme b. His-202 contributes to the a ubiquinone binding site. 4 helical membrane-spanning segments follow: residues 227–247, 289–309, 321–341, and 348–368; these read IKDI…ALFS, LGGV…PLLH, LSQI…WIGS, and FIII…VLFP.

It belongs to the cytochrome b family. As to quaternary structure, the cytochrome bc1 complex contains 11 subunits: 3 respiratory subunits (MT-CYB, CYC1 and UQCRFS1), 2 core proteins (UQCRC1 and UQCRC2) and 6 low-molecular weight proteins (UQCRH/QCR6, UQCRB/QCR7, UQCRQ/QCR8, UQCR10/QCR9, UQCR11/QCR10 and a cleavage product of UQCRFS1). This cytochrome bc1 complex then forms a dimer. The cofactor is heme b.

The protein localises to the mitochondrion inner membrane. In terms of biological role, component of the ubiquinol-cytochrome c reductase complex (complex III or cytochrome b-c1 complex) that is part of the mitochondrial respiratory chain. The b-c1 complex mediates electron transfer from ubiquinol to cytochrome c. Contributes to the generation of a proton gradient across the mitochondrial membrane that is then used for ATP synthesis. In Vireo olivaceus (Red-eyed vireo), this protein is Cytochrome b (MT-CYB).